We begin with the raw amino-acid sequence, 193 residues long: Ribonuclease HII (193 aa).

Positions 15–193 (YIVAGVDEAG…SYHRRSFKSC (179 aa)) constitute an RNase H type-2 domain. The a divalent metal cation site is built by Asp-21, Glu-22, and Asp-112.

The protein belongs to the RNase HII family. The cofactor is Mn(2+). Requires Mg(2+) as cofactor.

It localises to the cytoplasm. It catalyses the reaction Endonucleolytic cleavage to 5'-phosphomonoester.. Its function is as follows. Endonuclease that specifically degrades the RNA of RNA-DNA hybrids. The polypeptide is Ribonuclease HII (rnhB) (Rickettsia prowazekii (strain Madrid E)).